Here is a 340-residue protein sequence, read N- to C-terminus: Cathepsin S (340 aa).

A signal peptide spans M1–L17. Residues V18–T122 constitute a propeptide, activation peptide. Residue N120 is glycosylated (N-linked (GlcNAc...) asparagine). Cystine bridges form between C134-C233, C144-C189, C178-C222, and C281-C329. C147 is a catalytic residue. Residues H287 and N307 contribute to the active site.

The protein belongs to the peptidase C1 family. In terms of tissue distribution, widely expressed with highest expression found in non-skeletal tissues. Relatively high levels found in skeletal tissues. Expressed in spleen, B cells, dendritic cells and macrophages.

The protein resides in the lysosome. It localises to the secreted. Its subcellular location is the cytoplasmic vesicle. The protein localises to the phagosome. The enzyme catalyses Similar to cathepsin L, but with much less activity on Z-Phe-Arg-|-NHMec, and more activity on the Z-Val-Val-Arg-|-Xaa compound.. Its function is as follows. Thiol protease. Key protease responsible for the removal of the invariant chain from MHC class II molecules and MHC class II antigen presentation. The bond-specificity of this proteinase is in part similar to the specificities of cathepsin L. This chain is Cathepsin S (Ctss), found in Mus musculus (Mouse).